The primary structure comprises 626 residues: Basic helix-loop-helix ARNT-like protein 1 (626 aa).

The segment at 1 to 58 (MADQRMDISSTISDFMSPGPTDLLSGSLSTSGVDCNRKRKGSATDYQESMDTDKDDPH) is disordered. Serine 17 bears the Phosphoserine; by GSK3-beta mark. The span at 17 to 32 (SPGPTDLLSGSLSTSG) shows a compositional bias: low complexity. Phosphothreonine; by GSK3-beta is present on threonine 21. Positions 36-41 (NRKRKG) match the Nuclear localization signal motif. A bHLH domain is found at 72 to 125 (NAREAHSQIEKRRRDKMNSFIDELASLVPTCNAMSRKLDKLTVLRMAVQHMKTL). Residue serine 78 is modified to Phosphoserine. Phosphoserine; by CK2 is present on serine 90. The short motif at 142–152 (LSDDELKHLIL) is the Nuclear export signal 1 element. The 73-residue stretch at 143–215 (SDDELKHLIL…EQLSSSDTAP (73 aa)) folds into the PAS 1 domain. Lysine 252 participates in a covalent cross-link: Glycyl lysine isopeptide (Lys-Gly) (interchain with G-Cter in SUMO2 and SUMO3). A Glycyl lysine isopeptide (Lys-Gly) (interchain with G-Cter in SUMO); alternate cross-link involves residue lysine 259. Lysine 259 is covalently cross-linked (Glycyl lysine isopeptide (Lys-Gly) (interchain with G-Cter in SUMO2); alternate). Residues 326–396 (PQPVNGEIRV…ECHRQVLQTR (71 aa)) enclose the PAS 2 domain. A Nuclear export signal 2 motif is present at residues 361 to 369 (LAYLPQELL). Residues 401–444 (TNCYKFKIKDGSFITLRSRWFSFMNPWTKEVEYIVSTNTVVLAN) form the PAC domain. Disordered regions lie at residues 459 to 492 (SPHS…RAGA) and 511 to 595 (GSSP…SPSN). Positions 508–588 (RIRGSSPSSC…IGIDMIDNDQ (81 aa)) are interaction with CIART. Residues 511 to 521 (GSSPSSCGSSP) show a composition bias toward low complexity. N6-acetyllysine is present on lysine 538.

As to quaternary structure, component of the circadian clock oscillator which includes the CRY1/2 proteins, CLOCK or NPAS2, BMAL1 or BMAL2, CSNK1D and/or CSNK1E, TIMELESS and the PER1/2/3 proteins. Forms a heterodimer with CLOCK. The CLOCK-BMAL1 heterodimer is required for E-box-dependent transactivation, for CLOCK nuclear translocation and degradation, and, for phosphorylation of both CLOCK and BMAL1. Part of a nuclear complex which also includes RACK1 and PRKCA; RACK1 and PRKCA are recruited to the complex in a circadian manner. Interacts with NPAS2. Interacts with EZH2. Interacts with SUMO3. Interacts with SIRT1. Interacts with AHR. Interacts with ID1, ID2 and ID3. Interacts with DDX4. Interacts with OGT. Interacts with EED and SUZ12. Interacts with MTA1. Interacts with CIART. Interacts with HSP90. Interacts with KAT2B and EP300. Interacts with BHLHE40/DEC1 and BHLHE41/DEC2. Interacts with RELB and the interaction is enhanced in the presence of CLOCK. Interacts with PER1, PER2, CRY1 and CRY2 and this interaction requires a translocation to the nucleus. Interaction of the CLOCK-BMAL1 heterodimer with PER or CRY inhibits transcription activation. Interaction of the CLOCK-BMAL1 with CRY1 is independent of DNA but with PER2 is off DNA. The CLOCK-BMAL1 heterodimer interacts with GSK3B. Interacts with KDM5A. Interacts with KMT2A; in a circadian manner. Interacts with UBE3A. Interacts with PRKCG. Interacts with MAGEL2. Interacts with NCOA2. Interacts with THRAP3. The CLOCK-BMAL1 heterodimer interacts with PASD1. Interacts with PASD1. Interacts with USP9X. Interacts with PIWIL2 (via PIWI domain). Interacts with HDAC3. Interacts with HNF4A. Post-translationally, ubiquitinated, leading to its proteasomal degradation. Deubiquitinated by USP9X. O-glycosylated; contains O-GlcNAc. O-glycosylation by OGT prevents protein degradation by inhibiting ubiquitination. It also stabilizes the CLOCK-BMAL1 heterodimer thereby increasing CLOCK-BMAL1-mediated transcription of genes in the negative loop of the circadian clock such as PER1/2/3 and CRY1/2. In terms of processing, acetylated on Lys-538 by CLOCK during the repression phase of the circadian cycle. Acetylation facilitates recruitment of CRY1 protein and initiates the repression phase of the circadian cycle. Acetylated at Lys-538 by KAT5 during the activation phase of the cycle, leading to recruitment of the positive transcription elongation factor b (P-TEFb) and BRD4, followed by productive elongation of circadian transcripts. Deacetylated by SIRT1, which may result in decreased protein stability. Post-translationally, phosphorylated upon dimerization with CLOCK. Phosphorylation enhances the transcriptional activity, alters the subcellular localization and decreases the stability of the CLOCK-BMAL1 heterodimer by promoting its degradation. Phosphorylation shows circadian variations in the liver with a peak between CT10 to CT14. Phosphorylation at Ser-90 by CK2 is essential for its nuclear localization, its interaction with CLOCK and controls CLOCK nuclear entry. Dephosphorylation at Ser-78 is important for dimerization with CLOCK and transcriptional activity. Sumoylated on Lys-259 upon dimerization with CLOCK. Predominantly conjugated to poly-SUMO2/3 rather than SUMO1 and the level of these conjugates undergo rhythmic variation, peaking at CT9-CT12. Sumoylation localizes it exclusively to the PML body and promotes its ubiquitination in the PML body, ubiquitin-dependent proteasomal degradation and the transcriptional activity of the CLOCK-BMAL1 heterodimer. In terms of processing, undergoes lysosome-mediated degradation in a time-dependent manner in the liver.

The protein localises to the nucleus. Its subcellular location is the cytoplasm. It localises to the PML body. In terms of biological role, transcriptional activator which forms a core component of the circadian clock. The circadian clock, an internal time-keeping system, regulates various physiological processes through the generation of approximately 24 hour circadian rhythms in gene expression, which are translated into rhythms in metabolism and behavior. It is derived from the Latin roots 'circa' (about) and 'diem' (day) and acts as an important regulator of a wide array of physiological functions including metabolism, sleep, body temperature, blood pressure, endocrine, immune, cardiovascular, and renal function. Consists of two major components: the central clock, residing in the suprachiasmatic nucleus (SCN) of the brain, and the peripheral clocks that are present in nearly every tissue and organ system. Both the central and peripheral clocks can be reset by environmental cues, also known as Zeitgebers (German for 'timegivers'). The predominant Zeitgeber for the central clock is light, which is sensed by retina and signals directly to the SCN. The central clock entrains the peripheral clocks through neuronal and hormonal signals, body temperature and feeding-related cues, aligning all clocks with the external light/dark cycle. Circadian rhythms allow an organism to achieve temporal homeostasis with its environment at the molecular level by regulating gene expression to create a peak of protein expression once every 24 hours to control when a particular physiological process is most active with respect to the solar day. Transcription and translation of core clock components (CLOCK, NPAS2, BMAL1, BMAL2, PER1, PER2, PER3, CRY1 and CRY2) plays a critical role in rhythm generation, whereas delays imposed by post-translational modifications (PTMs) are important for determining the period (tau) of the rhythms (tau refers to the period of a rhythm and is the length, in time, of one complete cycle). A diurnal rhythm is synchronized with the day/night cycle, while the ultradian and infradian rhythms have a period shorter and longer than 24 hours, respectively. Disruptions in the circadian rhythms contribute to the pathology of cardiovascular diseases, cancer, metabolic syndromes and aging. A transcription/translation feedback loop (TTFL) forms the core of the molecular circadian clock mechanism. Transcription factors, CLOCK or NPAS2 and BMAL1 or BMAL2, form the positive limb of the feedback loop, act in the form of a heterodimer and activate the transcription of core clock genes and clock-controlled genes (involved in key metabolic processes), harboring E-box elements (5'-CACGTG-3') within their promoters. The core clock genes: PER1/2/3 and CRY1/2 which are transcriptional repressors form the negative limb of the feedback loop and interact with the CLOCK|NPAS2-BMAL1|BMAL2 heterodimer inhibiting its activity and thereby negatively regulating their own expression. This heterodimer also activates nuclear receptors NR1D1/2 and RORA/B/G, which form a second feedback loop and which activate and repress BMAL1 transcription, respectively. BMAL1 positively regulates myogenesis and negatively regulates adipogenesis via the transcriptional control of the genes of the canonical Wnt signaling pathway. Plays a role in normal pancreatic beta-cell function; regulates glucose-stimulated insulin secretion via the regulation of antioxidant genes NFE2L2/NRF2 and its targets SESN2, PRDX3, CCLC and CCLM. Negatively regulates the mTORC1 signaling pathway; regulates the expression of MTOR and DEPTOR. Controls diurnal oscillations of Ly6C inflammatory monocytes; rhythmic recruitment of the PRC2 complex imparts diurnal variation to chemokine expression that is necessary to sustain Ly6C monocyte rhythms. Regulates the expression of HSD3B2, STAR, PTGS2, CYP11A1, CYP19A1 and LHCGR in the ovary and also the genes involved in hair growth. Plays an important role in adult hippocampal neurogenesis by regulating the timely entry of neural stem/progenitor cells (NSPCs) into the cell cycle and the number of cell divisions that take place prior to cell-cycle exit. Regulates the circadian expression of CIART and KLF11. The CLOCK-BMAL1 heterodimer regulates the circadian expression of SERPINE1/PAI1, VWF, B3, CCRN4L/NOC, NAMPT, DBP, MYOD1, PPARGC1A, PPARGC1B, SIRT1, GYS2, F7, NGFR, GNRHR, BHLHE40/DEC1, ATF4, MTA1, KLF10 and also genes implicated in glucose and lipid metabolism. Promotes rhythmic chromatin opening, regulating the DNA accessibility of other transcription factors. May play a role in spermatogenesis; contributes to the chromatoid body assembly and physiology. The NPAS2-BMAL1 heterodimer positively regulates the expression of MAOA, F7 and LDHA and modulates the circadian rhythm of daytime contrast sensitivity by regulating the rhythmic expression of adenylate cyclase type 1 (ADCY1) in the retina. The preferred binding motif for the CLOCK-BMAL1 heterodimer is 5'-CACGTGA-3', which contains a flanking adenine nucleotide at the 3-prime end of the canonical 6-nucleotide E-box sequence. CLOCK specifically binds to the half-site 5'-CAC-3', while BMAL1 binds to the half-site 5'-GTGA-3'. The CLOCK-BMAL1 heterodimer also recognizes the non-canonical E-box motifs 5'-AACGTGA-3' and 5'-CATGTGA-3'. Essential for the rhythmic interaction of CLOCK with ASS1 and plays a critical role in positively regulating CLOCK-mediated acetylation of ASS1. Plays a role in protecting against lethal sepsis by limiting the expression of immune checkpoint protein CD274 in macrophages in a PKM2-dependent manner. Regulates the diurnal rhythms of skeletal muscle metabolism via transcriptional activation of genes promoting triglyceride synthesis (DGAT2) and metabolic efficiency (COQ10B). The chain is Basic helix-loop-helix ARNT-like protein 1 from Rattus norvegicus (Rat).